Here is a 617-residue protein sequence, read N- to C-terminus: Dihydroxy-acid dehydratase (617 aa).

Asp81 is a Mg(2+) binding site. Cys122 contacts [2Fe-2S] cluster. Mg(2+) is bound by residues Asp123 and Lys124. An N6-carboxylysine modification is found at Lys124. Cys197 contacts [2Fe-2S] cluster. Position 494 (Glu494) interacts with Mg(2+). Catalysis depends on Ser520, which acts as the Proton acceptor.

This sequence belongs to the IlvD/Edd family. Homodimer. It depends on [2Fe-2S] cluster as a cofactor. Mg(2+) serves as cofactor.

It carries out the reaction (2R)-2,3-dihydroxy-3-methylbutanoate = 3-methyl-2-oxobutanoate + H2O. The enzyme catalyses (2R,3R)-2,3-dihydroxy-3-methylpentanoate = (S)-3-methyl-2-oxopentanoate + H2O. Its pathway is amino-acid biosynthesis; L-isoleucine biosynthesis; L-isoleucine from 2-oxobutanoate: step 3/4. It functions in the pathway amino-acid biosynthesis; L-valine biosynthesis; L-valine from pyruvate: step 3/4. Its function is as follows. Functions in the biosynthesis of branched-chain amino acids. Catalyzes the dehydration of (2R,3R)-2,3-dihydroxy-3-methylpentanoate (2,3-dihydroxy-3-methylvalerate) into 2-oxo-3-methylpentanoate (2-oxo-3-methylvalerate) and of (2R)-2,3-dihydroxy-3-methylbutanoate (2,3-dihydroxyisovalerate) into 2-oxo-3-methylbutanoate (2-oxoisovalerate), the penultimate precursor to L-isoleucine and L-valine, respectively. This chain is Dihydroxy-acid dehydratase, found in Parafrankia sp. (strain EAN1pec).